The chain runs to 128 residues: Early 3 14.7 kDa protein (128 aa).

It belongs to the adenoviridae E3_15 family. May bind to host IKBKG, OPTN and RRAGA.

The protein resides in the host cytoplasm. It localises to the host nucleus. Functionally, may prevent Nf-kappaB activation by immune signals like Tumor necrosis factor, presumably by inhibiting NFKB1 dimer DNA-binding. May act directly at the TNF receptor to inhibit signaling. In Human adenovirus C serotype 2 (HAdV-2), this protein is Early 3 14.7 kDa protein.